The chain runs to 201 residues: Probable quinol oxidase subunit 3 (201 aa).

5 helical membrane-spanning segments follow: residues 20-40 (LGFWIFLTAEFSLFGTLFATL), 62-82 (LVLIMTFALLISSYTCGISIY), 91-111 (LMMFWMILTVLLGLVFVGFEI), 133-153 (FFILLGTHGAHVSLGIGWIIC), and 172-192 (FIVSLYWHFLDVVWIFIFTAV).

It belongs to the cytochrome c oxidase subunit 3 family.

It is found in the cell membrane. The catalysed reaction is 2 a quinol + O2 = 2 a quinone + 2 H2O. Its function is as follows. Catalyzes quinol oxidation with the concomitant reduction of oxygen to water. The protein is Probable quinol oxidase subunit 3 (qoxC) of Staphylococcus haemolyticus (strain JCSC1435).